We begin with the raw amino-acid sequence, 443 residues long: Thymidine phosphorylase (443 aa).

Belongs to the thymidine/pyrimidine-nucleoside phosphorylase family. In terms of assembly, homodimer.

The enzyme catalyses thymidine + phosphate = 2-deoxy-alpha-D-ribose 1-phosphate + thymine. It participates in pyrimidine metabolism; dTMP biosynthesis via salvage pathway; dTMP from thymine: step 1/2. Its function is as follows. The enzymes which catalyze the reversible phosphorolysis of pyrimidine nucleosides are involved in the degradation of these compounds and in their utilization as carbon and energy sources, or in the rescue of pyrimidine bases for nucleotide synthesis. The protein is Thymidine phosphorylase of Shewanella baltica (strain OS155 / ATCC BAA-1091).